The primary structure comprises 197 residues: UDP-N-acetylglucosamine transferase subunit ALG13 (197 aa).

This sequence belongs to the glycosyltransferase 28 family. In terms of assembly, heterodimer with ALG14 to form a functional enzyme.

Its subcellular location is the endoplasmic reticulum. It catalyses the reaction an N-acetyl-alpha-D-glucosaminyl-diphospho-di-trans,poly-cis-dolichol + UDP-N-acetyl-alpha-D-glucosamine = an N,N'-diacetylchitobiosyl-diphospho-di-trans,poly-cis-dolichol + UDP + H(+). In terms of biological role, involved in protein N-glycosylation. Essential for the second step of the dolichol-linked oligosaccharide pathway. This is UDP-N-acetylglucosamine transferase subunit ALG13 (ALG13) from Kluyveromyces lactis (strain ATCC 8585 / CBS 2359 / DSM 70799 / NBRC 1267 / NRRL Y-1140 / WM37) (Yeast).